A 305-amino-acid polypeptide reads, in one-letter code: Myb-like transcriptional regulator basR (305 aa).

3 Myb-like domains span residues 5–59, 60–110, and 111–162; these read RRRW…YNRF, TGGL…HHCL, and NPEL…TILS. Positions 175-215 are disordered; the sequence is PCCDSPSPSKSSRRPPSTPTSTPQVPGSRQGSSYDPYDYGS. The segment covering 198–207 has biased composition (polar residues); that stretch reads QVPGSRQGSS.

Its subcellular location is the nucleus. In terms of biological role, transcription regulator that acts as a central regulatory node for the integration of external bacterial signals leading to the regulation of secondary metabolite gene clusters such as orsellinic, lecanoric acid, cichorine, 2,4-dihydroxy-3-methyl-6-(2-oxopropyl)benzaldehyde (dba), emericellamide or microperfuranone clusters. In Emericella nidulans (strain FGSC A4 / ATCC 38163 / CBS 112.46 / NRRL 194 / M139) (Aspergillus nidulans), this protein is Myb-like transcriptional regulator basR.